A 146-amino-acid polypeptide reads, in one-letter code: Hemoglobin subunit beta (146 aa).

N-acetylvaline is present on Val-1. The 145-residue stretch at 2–146 (HLTPEEKALV…VANALAHKYH (145 aa)) folds into the Globin domain. N6-acetyllysine is present on Lys-59. His-63 contributes to the heme b binding site. Lys-82 carries the post-translational modification N6-acetyllysine. A heme b-binding site is contributed by His-92. S-nitrosocysteine is present on Cys-93. Residue Lys-144 is modified to N6-acetyllysine.

Belongs to the globin family. Heterotetramer of two alpha chains and two beta chains. Red blood cells.

Involved in oxygen transport from the lung to the various peripheral tissues. In Trichechus inunguis (Amazon manatee), this protein is Hemoglobin subunit beta (HBB).